A 240-amino-acid chain; its full sequence is Sugar fermentation stimulation protein homolog (240 aa).

Belongs to the SfsA family.

In Pasteurella multocida (strain Pm70), this protein is Sugar fermentation stimulation protein homolog.